A 455-amino-acid polypeptide reads, in one-letter code: DENN domain-containing protein 11 (455 aa).

V2 is modified (N-acetylvaline). Residues 15–187 (EGPAVSVPQD…QLEMPGHYSH (173 aa)) enclose the uDENN domain. The disordered stretch occupies residues 21–61 (VPQDPALQAGGWVRGGSGGGRVAAEAPRRREPEEPAPPEVL). A compositionally biased stretch (gly residues) spans 32–41 (WVRGGSGGGR). R41 bears the Omega-N-methylarginine mark. Positions 214-362 (WLPSIHRYMY…LNSADREKYR (149 aa)) constitute a cDENN domain. Positions 364-455 (LNEQRQMLLY…MLVIDNPCCP (92 aa)) constitute a dDENN domain.

Belongs to the DENND11 family. Expressed within the somatodendritic compartment of neurons, is also present on dendritic growth cones, but is not found in astrocytes.

Its function is as follows. Probable guanine nucleotide exchange factor (GEF). May promote the exchange of GDP to GTP, converting inactive GDP-bound small GTPases into their active GTP-bound form. May play a role in neuritogenesis, as well as in neuronal recovery and/or restructuring in the hippocampus following transient cerebral ischemia. This is DENN domain-containing protein 11 (Dennd11) from Rattus norvegicus (Rat).